We begin with the raw amino-acid sequence, 506 residues long: Ubiquitin carboxyl-terminal hydrolase 22 (506 aa).

The UBP-type zinc-finger motif lies at 4–121 (AGCSHVNGFK…KEEQRKAWKL (118 aa)). Residues cysteine 6, histidine 8, cysteine 46, cysteine 49, cysteine 59, cysteine 62, cysteine 67, histidine 72, histidine 76, histidine 82, cysteine 95, and cysteine 98 each coordinate Zn(2+). Positions 159–501 (RGLINLGNTC…EGYLLFYHKQ (343 aa)) constitute a USP domain. The active-site Nucleophile is cysteine 168. Residue histidine 460 is the Proton acceptor of the active site.

The protein belongs to the peptidase C19 family. UBP8 subfamily. As to quaternary structure, component of some SAGA transcription coactivator-HAT complexes.

The protein resides in the nucleus. The catalysed reaction is Thiol-dependent hydrolysis of ester, thioester, amide, peptide and isopeptide bonds formed by the C-terminal Gly of ubiquitin (a 76-residue protein attached to proteins as an intracellular targeting signal).. In terms of biological role, histone deubiquitinating component of the transcription regulatory histone acetylation (HAT) complex SAGA. Catalyzes the deubiquitination of both histones H2A and H2B, thereby acting as a coactivator. Recruited to specific gene promoters by activators, where it is required for transcription. This Danio rerio (Zebrafish) protein is Ubiquitin carboxyl-terminal hydrolase 22 (usp22).